The sequence spans 103 residues: Enhancer of rudimentary homolog (103 aa).

This sequence belongs to the E(R) family. Homodimer.

Functionally, may have a role in the cell cycle. In Aedes aegypti (Yellowfever mosquito), this protein is Enhancer of rudimentary homolog.